A 199-amino-acid polypeptide reads, in one-letter code: Prolactin-2 (199 aa).

Cystine bridges form between Cys-4–Cys-11, Cys-58–Cys-174, and Cys-191–Cys-199.

This sequence belongs to the somatotropin/prolactin family.

The protein localises to the secreted. The sequence is that of Prolactin-2 from Alligator mississippiensis (American alligator).